A 655-amino-acid polypeptide reads, in one-letter code: p-hydroxybenzoic acid efflux pump subunit AaeB (655 aa).

10 helical membrane passes run 13–33, 38–58, 69–89, 93–113, 121–141, 152–172, 370–390, 407–427, 431–451, and 482–502; these read FAVK…HFQL, WAVL…GGEP, LRII…IAMI, LLMI…SSLV, WGLA…EPLL, EIVI…PRSI, LFWL…IAVV, FIYG…VIIP, QSML…GIEV, and FLDS…VILL.

This sequence belongs to the aromatic acid exporter ArAE (TC 2.A.85) family.

The protein localises to the cell inner membrane. Functionally, forms an efflux pump with AaeA. Could function as a metabolic relief valve, allowing to eliminate certain compounds when they accumulate to high levels in the cell. This is p-hydroxybenzoic acid efflux pump subunit AaeB from Shigella dysenteriae serotype 1 (strain Sd197).